Reading from the N-terminus, the 164-residue chain is C-type natriuretic peptide (164 aa).

The first 23 residues, 1 to 23 (MVASRLAAGGLLLLALLALALDG), serve as a signal peptide directing secretion. 2 disordered regions span residues 24–93 (KPAP…AAAA) and 115–134 (HPEHHAGGGGGGGGGGGASR). Positions 24–142 (KPAPPQPLRK…SRRLKGVAKK (119 aa)) are excised as a propeptide. Over residues 58 to 67 (AGGGGGGGRS) the composition is skewed to gly residues. A compositionally biased stretch (low complexity) spans 68-93 (GSKAANAAPTAPKSKGGAAAAAAAAA). The segment covering 121 to 132 (GGGGGGGGGGGA) has biased composition (gly residues). Residues cysteine 148 and cysteine 164 are joined by a disulfide bond.

Belongs to the natriuretic peptide family. Expressed by the venom gland.

It is found in the secreted. Snake venom natriuretic peptide that has a vasorelaxant activity in rat aortic strips and a diuretic potency in anesthetized rats. May act by activating natriuretic receptors (NPR1 and/or NPR2). The polypeptide is C-type natriuretic peptide (Philodryas olfersii (Green snake)).